The following is a 478-amino-acid chain: Cytochrome c-552 (478 aa).

A signal peptide spans 1-26 (MARTILRARRFFSLILPFFFISSVYA). Histidine 94 contributes to the heme c binding site. Heme is bound by residues cysteine 122, cysteine 125, and lysine 126. The heme c site is built by cysteine 160, cysteine 163, histidine 164, cysteine 209, cysteine 212, and histidine 213. Glutamate 215, tyrosine 216, lysine 261, and glutamine 263 together coordinate Ca(2+). Tyrosine 216 provides a ligand contact to substrate. Histidine 264 is a substrate binding site. Residues histidine 275, cysteine 282, cysteine 285, histidine 286, histidine 301, cysteine 314, cysteine 317, histidine 318, and histidine 393 each coordinate heme c.

Belongs to the cytochrome c-552 family. Requires Ca(2+) as cofactor. Heme c is required as a cofactor.

The protein localises to the periplasm. It catalyses the reaction 6 Fe(III)-[cytochrome c] + NH4(+) + 2 H2O = 6 Fe(II)-[cytochrome c] + nitrite + 8 H(+). Its pathway is nitrogen metabolism; nitrate reduction (assimilation). Functionally, catalyzes the reduction of nitrite to ammonia, consuming six electrons in the process. The sequence is that of Cytochrome c-552 from Citrobacter koseri (strain ATCC BAA-895 / CDC 4225-83 / SGSC4696).